The primary structure comprises 210 residues: Large ribosomal subunit protein uL4 (210 aa).

The tract at residues 44 to 77 is disordered; the sequence is ARQGNASSKTRSEVRGGGRKPWRQKGTGRARAGS. Residues 60-71 show a composition bias toward basic residues; the sequence is GGRKPWRQKGTG.

It belongs to the universal ribosomal protein uL4 family. As to quaternary structure, part of the 50S ribosomal subunit.

One of the primary rRNA binding proteins, this protein initially binds near the 5'-end of the 23S rRNA. It is important during the early stages of 50S assembly. It makes multiple contacts with different domains of the 23S rRNA in the assembled 50S subunit and ribosome. In terms of biological role, forms part of the polypeptide exit tunnel. The polypeptide is Large ribosomal subunit protein uL4 (Microcystis aeruginosa (strain NIES-843 / IAM M-2473)).